Here is a 271-residue protein sequence, read N- to C-terminus: Thiazole synthase (271 aa).

The active-site Schiff-base intermediate with DXP is the K104. 1-deoxy-D-xylulose 5-phosphate contacts are provided by residues G165, 192-193 (AG), and 214-215 (NT).

This sequence belongs to the ThiG family. In terms of assembly, homotetramer. Forms heterodimers with either ThiH or ThiS.

The protein localises to the cytoplasm. The catalysed reaction is [ThiS sulfur-carrier protein]-C-terminal-Gly-aminoethanethioate + 2-iminoacetate + 1-deoxy-D-xylulose 5-phosphate = [ThiS sulfur-carrier protein]-C-terminal Gly-Gly + 2-[(2R,5Z)-2-carboxy-4-methylthiazol-5(2H)-ylidene]ethyl phosphate + 2 H2O + H(+). It functions in the pathway cofactor biosynthesis; thiamine diphosphate biosynthesis. Its function is as follows. Catalyzes the rearrangement of 1-deoxy-D-xylulose 5-phosphate (DXP) to produce the thiazole phosphate moiety of thiamine. Sulfur is provided by the thiocarboxylate moiety of the carrier protein ThiS. In vitro, sulfur can be provided by H(2)S. This is Thiazole synthase from Burkholderia thailandensis (strain ATCC 700388 / DSM 13276 / CCUG 48851 / CIP 106301 / E264).